The following is a 313-amino-acid chain: uncharacterized protein (313 aa).

9 consecutive transmembrane segments (helical) span residues 31-53, 62-84, 104-126, 147-161, 166-185, 198-220, 225-244, 264-282, and 286-308; these read AWGIGVIFPLYSLHALVLGGWLF, LFLFGCVFGMYEAYITKVLWNPY, VFFWHPIFAFILPLLIAEYIYTS, FALLLAALAGLNQSV, SMFWVALLSFFTILTPSFLL, RVLKLLTFALIILYLFWTFALRF, SFSGQLVVWLFYLLLFYLII, FFAACFLVYLTAFLITSSF, and PAAMLFLLAGTAYGTIVFASILI.

The protein resides in the cell membrane. This is an uncharacterized protein from Archaeoglobus fulgidus (strain ATCC 49558 / DSM 4304 / JCM 9628 / NBRC 100126 / VC-16).